We begin with the raw amino-acid sequence, 612 residues long: Zinc metalloproteinase nas-36 (612 aa).

Residues 1 to 16 (MLLLVLLFVFISATNA) form the signal peptide. Asn15 is a glycosylation site (N-linked (GlcNAc...) asparagine). Residues 17-122 (SDVGRRELEK…KSKPNVRGRR (106 aa)) constitute a propeptide that is removed on maturation. In terms of domain architecture, Peptidase M12A spans 123–320 (SFDASPESKW…IETINKAYCS (198 aa)). The N-linked (GlcNAc...) asparagine glycan is linked to Asn163. 8 cysteine pairs are disulfide-bonded: Cys166–Cys319, Cys190–Cys209, Cys329–Cys343, Cys345–Cys354, Cys365–Cys394, Cys515–Cys546, Cys519–Cys551, and Cys531–Cys536. His217 is a Zn(2+) binding site. Glu218 is a catalytic residue. The Zn(2+) site is built by His221 and His227. In terms of domain architecture, EGF-like spans 320–355 (SDRCSGSNDCKNGGYPHPKQCDTCLCPNGLSGPKCE). Residues 365-478 (CGGKIVVKEE…VGFKLQARAT (114 aa)) form the CUB domain. Residues 503 to 552 (TDQWAEWGSWSQCSRSCGGCGIMSRVRVCRTKQCKGRRQEFSTCNLKACP) enclose the TSP type-1 domain.

Zn(2+) is required as a cofactor.

It is found in the secreted. Its activity is regulated as follows. Inhibited by 1,10-phenanthroline. Its function is as follows. Metalloprotease. Involved in molting, a process during larval stages in which a new cuticle is formed and the old cuticle is shed. The polypeptide is Zinc metalloproteinase nas-36 (Haemonchus contortus (Barber pole worm)).